The sequence spans 545 residues: Pseudouridylate synthase RPUSD2 (545 aa).

The interval 48-121 (GLRASHQQNG…PPPKKRRTGV (74 aa)) is disordered. S68 carries the post-translational modification Phosphoserine. D274 is a catalytic residue. Phosphothreonine is present on T477.

It belongs to the pseudouridine synthase RluA family.

The catalysed reaction is a uridine in mRNA = a pseudouridine in mRNA. Pseudouridine synthase that catalyzes pseudouridylation of mRNAs. This chain is Pseudouridylate synthase RPUSD2, found in Homo sapiens (Human).